The primary structure comprises 215 residues: Uracil phosphoribosyltransferase (215 aa).

30–34 is a binding site for GTP; the sequence is KGMVR. 5-phospho-alpha-D-ribose 1-diphosphate is bound by residues Arg-80, Arg-105, and 139-147; that span reads DPMIATAST. Uracil is bound by residues Ile-202 and 207–209; that span reads GDA. Asp-208 is a binding site for 5-phospho-alpha-D-ribose 1-diphosphate.

The protein belongs to the UPRTase family. Mg(2+) serves as cofactor.

It carries out the reaction UMP + diphosphate = 5-phospho-alpha-D-ribose 1-diphosphate + uracil. It functions in the pathway pyrimidine metabolism; UMP biosynthesis via salvage pathway; UMP from uracil: step 1/1. Its activity is regulated as follows. Allosterically activated by GTP. Its function is as follows. Catalyzes the conversion of uracil and 5-phospho-alpha-D-ribose 1-diphosphate (PRPP) to UMP and diphosphate. The protein is Uracil phosphoribosyltransferase of Metallosphaera sedula (strain ATCC 51363 / DSM 5348 / JCM 9185 / NBRC 15509 / TH2).